The chain runs to 650 residues: Epithelial sodium channel subunit beta (650 aa).

Topologically, residues 1 to 95 (MLLHINPAYL…IICEGPKKKA (95 aa)) are cytoplasmic. The helical transmembrane segment at 96 to 116 (MWFLLTLLFTALVCWQWGIFI) threads the bilayer. The Extracellular portion of the chain corresponds to 117-542 (RTYLSWEVSV…GGQFGFWMGG (426 aa)). 5 cysteine pairs are disulfide-bonded: C143/C317, C229/C234, C241/C248, C294/C301, and C406/C458. Residue N244 is glycosylated (N-linked (GlcNAc...) asparagine). The N-linked (GlcNAc...) asparagine glycan is linked to N305. A helical transmembrane segment spans residues 543-563 (SVLCLIEFGEIIIDFVWITII). Over 564 to 650 (KLVALAKSLR…IESDSEGDAI (87 aa)) the chain is Cytoplasmic. Residues 600-650 (FQPDTAPRSPNTGPYPNEQALPIPGTPPPNYDSLRLQPLDVIESDSEGDAI) are disordered. The PY motif; recruits WW domain-containing proteins and is thereby required for ubiquitination and inhibition of the channel by NEDD4 and NEDD4L motif lies at 626-630 (PPPNY). Acidic residues predominate over residues 641–650 (IESDSEGDAI). S643 and S645 each carry phosphoserine.

It belongs to the amiloride-sensitive sodium channel (TC 1.A.6) family. SCNN1B subfamily. As to quaternary structure, component of the heterotrimeric epithelial sodium channel (ENaC) composed of an alpha/SCNN1A, a beta/SCNN1B and a gamma/SCNN1G subunit. An additional delta/SCNN1D subunit can replace the alpha/SCNN1A subunit to form an alternative channel with specific properties. Interacts with WWP1 (via WW domains). Interacts with WWP2 (via WW domains); inhibits the channel. Interacts with the full-length immature form of PCSK9 (pro-PCSK9). Interacts (N-glycosylated) with BPIFA1; the interaction is direct and inhibits the proteolytic processing of SCNN1A and SCNN1G and the activation of ENaC. Post-translationally, ubiquitinated. Can be ubiquitinated at multiple sites and undergo monoubiquitination and polyubiquitination. Ubiquitination by NEDD4 or NEDD4L inhibits the ENaC channel through endocytosis, intracellular retention and degradation of its individual subunits. However, some studies could not confirm the ubiquitination of this subunit of the ENaC. In terms of processing, phosphorylated on serine and threonine residues. Aldosterone and insulin increase the basal level of phosphorylation. N-glycosylated. N-glycosylation is required for interaction with BPIFA1.

It is found in the apical cell membrane. The protein resides in the cytoplasmic vesicle membrane. The catalysed reaction is Na(+)(in) = Na(+)(out). Its activity is regulated as follows. Originally identified and characterized by its inhibition by the diuretic drug amiloride. Its function is as follows. This is one of the three pore-forming subunits of the heterotrimeric epithelial sodium channel (ENaC), a critical regulator of sodium balance and fluid homeostasis. ENaC operates in epithelial tissues, where it mediates the electrodiffusion of sodium ions from extracellular fluid through the apical membrane of cells, with water following osmotically. It plays a key role in maintaining sodium homeostasis through electrogenic sodium reabsorption in the kidneys. Additionally, ENaC is essential for airway surface liquid homeostasis, which is crucial for proper mucus clearance. This chain is Epithelial sodium channel subunit beta, found in Pan troglodytes (Chimpanzee).